Reading from the N-terminus, the 267-residue chain is Cysteine protease avirulence protein AvrPphB (267 aa).

Residue glycine 63 is the site of N-myristoyl glycine; by host attachment. Catalysis depends on residues cysteine 98, histidine 212, and aspartate 227.

This sequence belongs to the peptidase C58 family. In terms of assembly, in infected plant cells, the 28 kDa product interacts with PBS1. Post-translationally, autocleaved. This function is essential for myristoylation in infected plant cell and for eliciting the plant hypersensitive response. In terms of processing, myristoylation of 28 kDa product in infected plant cells; it mediates the localization to membranes.

The protein resides in the secreted. It localises to the host membrane. In terms of biological role, cysteine protease avirulence protein, which is essential during infection of plant cells from cultivar-specific of beans and Arabidopsis thaliana. The autocleavage of the protein is required for virulence function. May act by affecting the plant defense system. In plants lacking R3 or RPS5 resistance genes, it probably impairs the plant defense system and leads to the bacteria multiplication. In contrast, in plants containing the R3 or RPS5 protein, it is unable to induce disease symptoms, explaining its avirulence name. The 7 kDa product is required for the type-III translocation from Pseudomonas strains to the plant, but are partially dispensable for effector recognition following in planta expression. In infected plants, it acts by cleaving the PBS1 protein, which leads to resistance or disease, depending on the presence or absence of RPS5, respectively. Targets the Arabidopsis kinases PBS1, BIK1, PBL1, PBL2, PBL3, PBL5, PBL7, PBL9 and PBL11 for cleavage in vitro. Can block recognition of AvrB avirulence factor by plant cells by cleaving Arabidopsis RIPK kinase and suppressing Arabidopsis RPM1 activation. Cannot block AvrRpm1-induced activation of RPM1. The protein is Cysteine protease avirulence protein AvrPphB (avrPph3) of Pseudomonas savastanoi pv. phaseolicola (Pseudomonas syringae pv. phaseolicola).